A 614-amino-acid polypeptide reads, in one-letter code: Zinc metalloproteinase-disintegrin-like VLAIP-B (614 aa).

Residues 1–20 (MMQVLLVTICLAVFPYQGSS) form the signal peptide. Residues 21 to 193 (IILESGNVND…KASQLNLTPE (173 aa)) constitute a propeptide that is removed on maturation. A Pyrrolidone carboxylic acid modification is found at Q194. The Peptidase M12B domain maps to 202 to 398 (KYVELVIVAD…KMPQCILNKP (197 aa)). E205 contacts Ca(2+). An N-linked (GlcNAc...) asparagine glycan is attached at N262. Residue D289 participates in Ca(2+) binding. Disulfide bonds link C313–C393, C353–C377, and C355–C360. H338 provides a ligand contact to Zn(2+). E339 is an active-site residue. Zn(2+)-binding residues include H342 and H348. C393, N396, V408, N411, F413, E415, E418, and D421 together coordinate Ca(2+). The 87-residue stretch at 406-492 (PAVCGNYFVE…ECPTDQFQRN (87 aa)) folds into the Disintegrin domain. Disulfide bonds link C409-C438, C420-C433, C422-C428, C432-C455, C446-C452, C451-C477, C464-C484, C471-C503, C496-C508, C515-C565, C530-C576, C543-C553, C560-C602, and C596-C607. A D/ECD-tripeptide motif is present at residues 470 to 472 (ECD). 3 N-linked (GlcNAc...) asparagine glycosylation sites follow: N505, N547, and N568.

This sequence belongs to the venom metalloproteinase (M12B) family. P-III subfamily. P-IIIc sub-subfamily. Heterodimer; disulfide-linked. Zn(2+) is required as a cofactor. The N-terminus is blocked. Expressed by the venom gland.

The protein resides in the secreted. With respect to regulation, inhibited by EDTA or 1,10-phenanthroline. Not inhibited by PMSF. Its function is as follows. This metalloproteinase hydrolyzes azocasein, and insulin B-chain (at the '38-Ala-|-Leu-39' bond). Also hydrolyzes the Aalpha-chain (FGA) and more slowly the Bbeta-chain of fibrinogen (FGB), without affecting the gamma-chain. Cleaves alpha-chain of fibrinogen at '432-Lys-|-Leu-433' and '535-Pro-|-Met-536' bonds. Does not cleave fibrin. Inhibits endothelial cell adhesion to extracellular matrix proteins such as fibrinogen, fibronectin, vitronectin, collagen I, and collagen IV. Induces apoptosis in vascular endothelial cells. The polypeptide is Zinc metalloproteinase-disintegrin-like VLAIP-B (Macrovipera lebetinus (Levantine viper)).